The chain runs to 342 residues: Trans-enoyl reductase himH (342 aa).

46–49 (TDWK) contributes to the NADP(+) binding site. 133–140 (LSVSTAAS) contacts substrate. Residues 168–171 (SSSV), 191–194 (SQAN), 255–256 (VM), and 329–330 (VS) contribute to the NADP(+) site.

This sequence belongs to the zinc-containing alcohol dehydrogenase family. As to quaternary structure, monomer.

The protein operates within secondary metabolite biosynthesis. In terms of biological role, trans-enoyl reductase; part of the him gene cluster that mediates the biosynthesis of himeic acid A, a ubiquitin-activating enzyme (E1) inhibitor. First, himA, together with the trans-enoyl reductase himH, catalyzes the formation of apolyketide chain, which is then condensed with leucine by the NRPS activity of himA. Dieckmann cyclization and release from himA gives a tetramic acid intermediate as the product of himA PKS-NRPS. HimG then catalyzes alpha-oxidation of the tetramic acid ring, with a subsequent rearrangement to yield apyrone intermediate. Two terminal methyl groups of polyketide and amide side chains are oxidized to carboxylic acids by himC cytochrome P450 monooxygenase to form himeic acid A. Himeic acid A is further converted to himeic acid B and C during culture growth. No gene responsible for pyrone to pyridone conversion was found in the him gene cluster and himeic acid A is non-enzymatically converted to himeic acid C by the incorporation of an ammonium nitrogen atom in a pH5 buffer, and to himeic acid B at a conversion ratio of 50% during incubation in MeOH for 5 days. The polypeptide is Trans-enoyl reductase himH (Aspergillus japonicus).